Here is a 73-residue protein sequence, read N- to C-terminus: Neurogranin (73 aa).

Positions 26-55 (ANAAAAKIQASFRGHMTRKKIKGGEIDRKT) constitute an IQ domain. Phosphoserine; by PKC is present on Ser-36. A compositionally biased stretch (basic and acidic residues) spans 47–59 (KGGEIDRKTKDAE). The disordered stretch occupies residues 47–73 (KGGEIDRKTKDAECANSTRGGDLRNGD).

It belongs to the neurogranin family.

Functionally, acts as a 'third messenger' substrate of protein kinase C-mediated molecular cascades during synaptic development and remodeling. Binds to calmodulin in the absence of calcium. The chain is Neurogranin (NRGN) from Serinus canaria (Island canary).